The primary structure comprises 1161 residues: Nardilysin (1161 aa).

Positions 1–18 are cleaved as a signal peptide; sequence MLRRVAVAAVFATGRKLR. 2 disordered regions span residues 42 to 105 and 130 to 218; these read KPFP…KSPS and VEGK…KKTT. A phosphoserine mark is found at Ser-85, Ser-91, and Ser-93. Over residues 138–209 the composition is skewed to acidic residues; sequence TDEEEEEEEE…EENELEELEE (72 aa). Zn(2+) is bound at residue His-244. The Proton acceptor role is filled by Glu-247. Zn(2+) is bound by residues His-248 and Glu-325.

The protein belongs to the peptidase M16 family. Interacts with BACE1 and NRG1. It depends on Zn(2+) as a cofactor. As to expression, testis, and in a lower level in brain, heart and adrenal glands.

The protein localises to the mitochondrion. The protein resides in the cell projection. Its subcellular location is the dendrite. The enzyme catalyses Hydrolysis of polypeptides, preferably at -Xaa-|-Arg-Lys-, and less commonly at -Arg-|-Arg-Xaa-, in which Xaa is not Arg or Lys.. Cleaves peptide substrates on the N-terminus of arginine residues in dibasic pairs. Is a critical activator of BACE1- and ADAM17-mediated pro-neuregulin ectodomain shedding, involved in the positive regulation of axonal maturation and myelination. Required for proper functioning of 2-oxoglutarate dehydrogenase (OGDH). The protein is Nardilysin of Rattus norvegicus (Rat).